Reading from the N-terminus, the 166-residue chain is tRNA-acetylating toxin (166 aa).

The segment at 1–22 (MSGYSAPRRISDADDVTSFSSG) is disordered. In terms of domain architecture, N-acetyltransferase spans 1–162 (MSGYSAPRRI…LMLLMKDARA (162 aa)). Tyrosine 138 is an active-site residue.

The protein belongs to the acetyltransferase family. GNAT subfamily. Homodimer, forms a complex with cognate antitoxin TacA.

The catalysed reaction is glycyl-tRNA(Gly) + acetyl-CoA = N-acetylglycyl-tRNA(Gly) + CoA + H(+). Functionally, toxic component of a type II toxin-antitoxin (TA) system. Overexpression of this gene alone in M.smegmatis inhibits growth, while overexpression of the tacA-tacT operon does not. Acetylates glycyl-tRNA(Gly) but not other tRNAs, blocks in vitro translation in the presence, but not absence, of acetyl-coenzyme A. Peptidyl-tRNA hydrolase (pth) counteracts the product of this enzyme in vitro. Neutralized by cognate antitoxin TacA. Does not seem to be active in laboratory growth conditions. TacA-TacT both represses and derepresses expression of its own operon. This chain is tRNA-acetylating toxin, found in Mycobacterium tuberculosis (strain ATCC 25618 / H37Rv).